Here is a 365-residue protein sequence, read N- to C-terminus: 3-dehydroquinate synthase (365 aa).

NAD(+)-binding positions include 106–110 (GVIGD), 130–131 (TT), K142, K151, and 169–172 (FFAT). E184, H247, and H264 together coordinate Zn(2+).

It belongs to the sugar phosphate cyclases superfamily. Dehydroquinate synthase family. Requires NAD(+) as cofactor. Co(2+) is required as a cofactor. Zn(2+) serves as cofactor.

It is found in the cytoplasm. The catalysed reaction is 7-phospho-2-dehydro-3-deoxy-D-arabino-heptonate = 3-dehydroquinate + phosphate. It participates in metabolic intermediate biosynthesis; chorismate biosynthesis; chorismate from D-erythrose 4-phosphate and phosphoenolpyruvate: step 2/7. Catalyzes the conversion of 3-deoxy-D-arabino-heptulosonate 7-phosphate (DAHP) to dehydroquinate (DHQ). This chain is 3-dehydroquinate synthase, found in Listeria monocytogenes serotype 4b (strain F2365).